Here is a 246-residue protein sequence, read N- to C-terminus: B-cell receptor-associated protein 31 (246 aa).

Residues 2–6 (SLQWT) lie on the Lumenal side of the membrane. Residues 7 to 27 (AVATFLYAEVFVVLLLCIPFI) traverse the membrane as a helical segment. Over 28–43 (SPKRWQKIFKSRLVEL) the chain is Cytoplasmic. Residues 44–64 (LVSYGNTFFVVLIVILVLLVI) form a helical membrane-spanning segment. The Lumenal segment spans residues 65–102 (DAVREIRKYDDVTEKVNLQNNPGAMEHFHMKLFRAQRN). Residues 103-123 (LYIAGFSLLLSFLLRRLVTLI) form a helical membrane-spanning segment. Residues 124–246 (SQQATLLASN…VDGPMDKKEE (123 aa)) are Cytoplasmic-facing. Residues 165 to 237 (GGKLDVGNAE…EEHAKLQAAV (73 aa)) are a coiled coil. The Di-lysine motif signature appears at 243 to 246 (KKEE).

The protein belongs to the BCAP29/BCAP31 family. As to quaternary structure, homodimer and heterodimer with BCAP29. Binds CASP8 (isoform 9) as a complex containing BCAP31, BCAP29, BCL2 and/or BCL2L1. Forms a complex (via C-terminus) with TOMM40 which mediates the translocation of components of the mitochondrial membrane respiratory chain NADH dehydrogenase (Complex I) from the cytosol to the mitochondria; within the complex BCAP31 interacts directly with unprocessed and processed NDUFS4 and NDUFB11. Interacts with VDAC1. Interacts with VAMP3, VAMP1 and membrane IgD immunoglobulins. Interacts with HACD2. Interacts with DNM1L; may form part of a larger protein complex at the endoplasmic reticulum-mitochondrial interface during mitochondrial fission. (Microbial infection) Interacts (via C-terminus) with HRSV membrane protein SH; this interaction is direct. In terms of processing, cleaved by CASP8 and other caspases. As to expression, ubiquitous. Highly expressed in neurons and discrete endocrine cells.

The protein resides in the endoplasmic reticulum membrane. The protein localises to the endoplasmic reticulum-Golgi intermediate compartment membrane. Functionally, functions as a chaperone protein. Is one of the most abundant endoplasmic reticulum (ER) proteins. Plays a role in the export of secreted proteins in the ER, the recognition of abnormally folded protein and their targeting to the ER associated-degradation (ERAD). Also serves as a cargo receptor for the export of transmembrane proteins. Plays a role in the assembly of the mitochondrial membrane respiratory chain NADH dehydrogenase (Complex I) by stimulating the translocation of NDUFS4 and NDUFB11 from the cytosol to the mitochondria via interaction with TOMM40. In response to ER stress, delocalizes from the ER-mitochondria contact sites and binds BCL2. May be involved in CASP8-mediated apoptosis. This chain is B-cell receptor-associated protein 31, found in Homo sapiens (Human).